The sequence spans 529 residues: Putative inorganic phosphate cotransporter (529 aa).

8 helical membrane passes run 37 to 57, 110 to 130, 148 to 168, 202 to 222, 232 to 252, 338 to 358, 429 to 449, and 466 to 486; these read FATRYFVTFMLFLGMANAYVM, YILSSFFYGYVITQIPFGILA, VFAFLVPVAARGGGVWGLCAV, AVYAGAQFGTIISMPLSGLLA, SIFYVFGIVGTVWSIAFLIFV, LPYLAMWLFSMFISVVADWMI, FLMSITNCSANLAGLLAPIAA, and IVFFIAAFVYIICGTFYNIFG. The disordered stretch occupies residues 495–529; sequence NPEDDEQKPALQTTVTTSPARLSNGSTAPAAISSS. The segment covering 504-529 has biased composition (polar residues); sequence ALQTTVTTSPARLSNGSTAPAAISSS.

This sequence belongs to the major facilitator superfamily. Sodium/anion cotransporter family.

The protein localises to the membrane. In terms of biological role, may be an inorganic phosphate cotransporter. The polypeptide is Putative inorganic phosphate cotransporter (Picot) (Drosophila melanogaster (Fruit fly)).